Here is an 89-residue protein sequence, read N- to C-terminus: Small ribosomal subunit protein uS15 (89 aa).

Belongs to the universal ribosomal protein uS15 family. As to quaternary structure, part of the 30S ribosomal subunit. Forms a bridge to the 50S subunit in the 70S ribosome, contacting the 23S rRNA.

One of the primary rRNA binding proteins, it binds directly to 16S rRNA where it helps nucleate assembly of the platform of the 30S subunit by binding and bridging several RNA helices of the 16S rRNA. Functionally, forms an intersubunit bridge (bridge B4) with the 23S rRNA of the 50S subunit in the ribosome. The chain is Small ribosomal subunit protein uS15 from Streptococcus equi subsp. zooepidemicus (strain H70).